Here is a 95-residue protein sequence, read N- to C-terminus: Protein TusB (95 aa).

Belongs to the DsrH/TusB family. In terms of assembly, heterohexamer, formed by a dimer of trimers. The hexameric TusBCD complex contains 2 copies each of TusB, TusC and TusD. The TusBCD complex interacts with TusE.

It localises to the cytoplasm. In terms of biological role, part of a sulfur-relay system required for 2-thiolation of 5-methylaminomethyl-2-thiouridine (mnm(5)s(2)U) at tRNA wobble positions. The chain is Protein TusB from Escherichia fergusonii (strain ATCC 35469 / DSM 13698 / CCUG 18766 / IAM 14443 / JCM 21226 / LMG 7866 / NBRC 102419 / NCTC 12128 / CDC 0568-73).